We begin with the raw amino-acid sequence, 656 residues long: CXXC-type zinc finger protein 1 (656 aa).

Met-1 carries the post-translational modification N-acetylmethionine. Residues 1 to 14 (MEGDGSDPEPPDAG) are compositionally biased toward acidic residues. The tract at residues 1–20 (MEGDGSDPEPPDAGEDSKSE) is disordered. 2 positions are modified to phosphoserine: Ser-6 and Ser-19. Residues 28-76 (YCICRKPDINCFMIGCDNCNEWFHGDCIRITEKMAKAIREWYCRECREK) form a PHD-type zinc finger. Positions 84–162 (YRHKKSRERD…QHHQQQQQQI (79 aa)) are disordered. Positions 90-120 (RERDGNERDSSEPRDEGGGRKRPVPDPDLQR) are enriched in basic and acidic residues. Position 124 is a phosphoserine (Ser-124). A CXXC-type zinc finger spans residues 160 to 209 (QQIKRSARMCGECEACRRTEDCGHCDFCRDMKKFGGPNKIRQKCRLRQCQ). Zn(2+) is bound by residues Cys-169, Cys-172, Cys-175, Cys-181, Cys-184, Cys-187, Cys-203, and Cys-208. 2 disordered regions span residues 219–287 (FPSS…LPLD) and 311–373 (EESP…ASLP). Ser-224 carries the phosphoserine modification. Residue Thr-227 is modified to Phosphothreonine. Residues 239–249 (LPTQQQPQPSQ) are compositionally biased toward low complexity. Residue Lys-250 forms a Glycyl lysine isopeptide (Lys-Gly) (interchain with G-Cter in SUMO2) linkage. Residues 321 to 334 (RKRAVKVKHVKRRE) are compositionally biased toward basic residues. Residues 335 to 345 (KKSEKKKEERY) show a composition bias toward basic and acidic residues. Over residues 346–358 (KRHRQKQKHKDKW) the composition is skewed to basic residues. Over residues 359 to 368 (KHPERADAKD) the composition is skewed to basic and acidic residues. Residues 422–474 (AEEHGKKLLERIRREQQSARTRLQEMERRFHELEAIILRAKQQAVREDEESNE) adopt a coiled-coil conformation.

As to quaternary structure, component of the SET1 complex, at least composed of the catalytic subunit (SETD1A or SETD1B), WDR5, WDR82, RBBP5, ASH2L/ASH2, CXXC1/CFP1 HCFC1 and DPY30. Interacts with SETD1A. Interacts with ZNF335. Interacts with PRDM9; this interaction does not link PRDM9-activated recombination hotspot sites with DSB machinery and is not required for the hotspot recognition pathway. Interacts with histone H3K4me3. Post-translationally, may be regulated by proteolysis. As to expression, ubiquitous.

The protein localises to the nucleus speckle. It localises to the nucleus. Transcriptional activator that exhibits a unique DNA binding specificity for CpG unmethylated motifs with a preference for CpGG. The polypeptide is CXXC-type zinc finger protein 1 (CXXC1) (Homo sapiens (Human)).